The sequence spans 239 residues: Sugar fermentation stimulation protein homolog (239 aa).

The protein belongs to the SfsA family.

The polypeptide is Sugar fermentation stimulation protein homolog (Sinorhizobium medicae (strain WSM419) (Ensifer medicae)).